We begin with the raw amino-acid sequence, 288 residues long: Transposase for insertion sequence element IS1106 (288 aa).

It belongs to the transposase 11 family.

Functionally, involved in the transposition of the insertion sequence. The protein is Transposase for insertion sequence element IS1106 of Neisseria meningitidis serogroup B.